A 300-amino-acid polypeptide reads, in one-letter code: tRNA dimethylallyltransferase (300 aa).

Glycine 9–serine 16 serves as a coordination point for ATP. Residue threonine 11–serine 16 participates in substrate binding. Residues aspartate 34–glutamine 37 form an interaction with substrate tRNA region.

Belongs to the IPP transferase family. As to quaternary structure, monomer. Requires Mg(2+) as cofactor.

It catalyses the reaction adenosine(37) in tRNA + dimethylallyl diphosphate = N(6)-dimethylallyladenosine(37) in tRNA + diphosphate. Catalyzes the transfer of a dimethylallyl group onto the adenine at position 37 in tRNAs that read codons beginning with uridine, leading to the formation of N6-(dimethylallyl)adenosine (i(6)A). This is tRNA dimethylallyltransferase from Ehrlichia canis (strain Jake).